We begin with the raw amino-acid sequence, 143 residues long: Peptide methionine sulfoxide reductase B9 (143 aa).

The MsrB domain occupies 19 to 140; the sequence is DQDWRAILSP…NSVSLKFSEI (122 aa). The Zn(2+) site is built by C58, C61, C104, and C107. C76 and C129 form a disulfide bridge. Catalysis depends on C129, which acts as the Nucleophile.

The protein belongs to the MsrB Met sulfoxide reductase family. The cofactor is Zn(2+).

It localises to the cytoplasm. The protein localises to the cytosol. It catalyses the reaction L-methionyl-[protein] + [thioredoxin]-disulfide + H2O = L-methionyl-(R)-S-oxide-[protein] + [thioredoxin]-dithiol. Its function is as follows. Catalyzes the reduction of methionine sulfoxide (MetSO) to methionine in proteins. Plays a protective role against oxidative stress by restoring activity to proteins that have been inactivated by methionine oxidation. MSRB family specifically reduces the MetSO R-enantiomer. This is Peptide methionine sulfoxide reductase B9 (MSRB9) from Arabidopsis thaliana (Mouse-ear cress).